A 397-amino-acid chain; its full sequence is Polyphosphatase (397 aa).

Mg(2+)-binding residues include aspartate 41, aspartate 127, and histidine 148. Residues aspartate 41, aspartate 127, and histidine 148 each coordinate Mn(2+). The ATP site is built by histidine 149, serine 286, and arginine 381.

Belongs to the PPase class C family. The cofactor is Mn(2+). It depends on Mg(2+) as a cofactor.

It catalyses the reaction [phosphate](n) + H2O = [phosphate](n-1) + phosphate + H(+). Its function is as follows. Polyphosphatase (polyPase) involved in the degradation of inorganic polyphosphates (polyP) that is able to degrade a range of chains from three to several hundreds of residues in a highly processive manner. Exclusively shows exopolyphosphatase activity, cleaving inside the polyP chain. The sequence is that of Polyphosphatase from Saccharomyces cerevisiae (strain ATCC 204508 / S288c) (Baker's yeast).